Here is an 868-residue protein sequence, read N- to C-terminus: MRELVNIPLLQMLTLVAFSGTEKLPKAPVITTPLETVDALVEEVATFMCAVESYPQPEISWTRNKILIKLFDTRYSIRENGQLLTILSVEDSDDGIYCCTANNGVGGAVESCGALQVKMKPKITRPPINVKIIEGLKAVLPCTTMGNPKPSVSWIKGDSALRENSRIAVLESGSLRIHNVQKEDAGQYRCVAKNSLGTAYSKLVKLEVEVFARILRAPESHNVTFGSFVTLRCTAIGMPVPTISWIENGNAVSSGSIQENVKDRVIDSRLQLFITKPGLYTCIATNKHGEKFSTAKAAATVSIAEWSKSQKESKGYCAQYRGEVCDAVLVKDSLVFFNTSYPDPEEAQELLIHTAWNELKAVSPLCRPAAEALLCNHLFQECSPGVLPTPMPICREYCLAVKELFCAKEWLAMEGKTHRGLYRSGMHFLPVPECSKLPSMHQDPTACTRLPYLDYKKENITTFPSITSSKPSVDIPNLPASTSSFAVSPAYSMTVIISIMSCFAVFALLTITTLYCCRRRREWKNKKRESAAVTLTTLPSELLLDRLHPNPMYQRMPLLLNPKLLSLEYPRNNIEYVRDIGEGAFGRVFQARAPGLLPYEPFTMVAVKMLKEEASADMQADFQREAALMAEFDNPNIVKLLGVCAVGKPMCLLFEYMAYGDLNEFLRSMSPHTVCSLSHSDLSTRARVSSPGPPPLSCAEQLCIARQVAAGMAYLSERKFVHRDLATRNCLVGENMVVKIADFGLSRNIYSADYYKADGNDAIPIRWMPPESIFYNRYTTESDVWAYGVVLWEIFSYGLQPYYGMAHEEVIYYVRDGNILACPENCPLELYNLMRLCWSKLPADRPSFCSIHRILQRMCERAEGTVGV.

The N-terminal stretch at 1 to 21 is a signal peptide; it reads MRELVNIPLLQMLTLVAFSGT. Over 22-494 the chain is Extracellular; sequence EKLPKAPVIT…FAVSPAYSMT (473 aa). Ig-like domains are found at residues 28–116, 121–205, and 212–302; these read PVIT…GALQ, PKIT…KLVK, and ARIL…ATVS. Disulfide bonds link C49–C99, C98–C112, and C142–C190. An N-linked (GlcNAc...) asparagine glycan is attached at N222. 6 disulfides stabilise this stretch: C233/C282, C317/C382, C325/C375, C366/C406, C394/C447, and C398/C434. In terms of domain architecture, FZ spans 312–450; the sequence is ESKGYCAQYR…HQDPTACTRL (139 aa). N338 carries an N-linked (GlcNAc...) asparagine glycan. N-linked (GlcNAc...) asparagine glycosylation occurs at N459. Residues 495-515 traverse the membrane as a helical segment; it reads VIISIMSCFAVFALLTITTLY. The Cytoplasmic segment spans residues 516-868; that stretch reads CCRRRREWKN…CERAEGTVGV (353 aa). Y553 is modified (phosphotyrosine; by autocatalysis). The 282-residue stretch at 574-855 folds into the Protein kinase domain; sequence IEYVRDIGEG…PSFCSIHRIL (282 aa). ATP contacts are provided by residues 580–588 and K608; that span reads IGEGAFGRV. S680 and S697 each carry phosphoserine; by CK2. D724 serves as the catalytic Proton acceptor. The residue at position 754 (Y754) is a Phosphotyrosine; by autocatalysis.

The protein belongs to the protein kinase superfamily. Tyr protein kinase family. As to quaternary structure, monomer. Homodimer. Interacts with LRP4; the heterodimer forms an AGRIN receptor complex that binds AGRIN resulting in activation of MUSK. Forms a heterotetramer composed of 2 DOK7 and 2 MUSK molecules which facilitates MUSK trans-autophosphorylation on tyrosine residue and activation. Interacts (via cytoplasmic part) with DOK7 (via IRS-type PTB domain); requires MUSK phosphorylation. Interacts with DVL1 (via DEP domain); the interaction is direct and mediates the formation of a DVL1, MUSK and PAK1 ternary complex involved in AChR clustering. Interacts with PDZRN3; this interaction is enhanced by agrin. Interacts with FNTA; the interaction is direct and mediates AGRIN-induced phosphorylation and activation of FNTA. Interacts with CSNK2B; mediates regulation by CK2. Interacts (via the cytoplasmic domain) with DNAJA3. Interacts with NSF; may regulate MUSK endocytosis and activity. Interacts with CAV3; may regulate MUSK signaling. Interacts with RNF31. Interacts with DOK7. Mg(2+) is required as a cofactor. Ubiquitinated by PDZRN3. Ubiquitination promotes endocytosis and lysosomal degradation. In terms of processing, phosphorylated. Phosphorylation is induced by AGRIN in a LRP4-dependent manner. Autophosphorylated. Autophosphorylation at Tyr-553 is required for interaction with DOK7 which in turn stimulates the phosphorylation and the activation of MUSK. Post-translationally, neddylated. In terms of tissue distribution, muscle specific.

The protein resides in the postsynaptic cell membrane. It carries out the reaction L-tyrosyl-[protein] + ATP = O-phospho-L-tyrosyl-[protein] + ADP + H(+). Its activity is regulated as follows. Positively regulated by CK2. Functionally, receptor tyrosine kinase which plays a central role in the formation and the maintenance of the neuromuscular junction (NMJ), the synapse between the motor neuron and the skeletal muscle. Recruitment of AGRIN by LRP4 to the MUSK signaling complex induces phosphorylation and activation of MUSK, the kinase of the complex. The activation of MUSK in myotubes regulates the formation of NMJs through the regulation of different processes including the specific expression of genes in subsynaptic nuclei, the reorganization of the actin cytoskeleton and the clustering of the acetylcholine receptors (AChR) in the postsynaptic membrane. May regulate AChR phosphorylation and clustering through activation of ABL1 and Src family kinases which in turn regulate MUSK. DVL1 and PAK1 that form a ternary complex with MUSK are also important for MUSK-dependent regulation of AChR clustering. May positively regulate Rho family GTPases through FNTA. Mediates the phosphorylation of FNTA which promotes prenylation, recruitment to membranes and activation of RAC1 a regulator of the actin cytoskeleton and of gene expression. Other effectors of the MUSK signaling include DNAJA3 which functions downstream of MUSK. May also play a role within the central nervous system by mediating cholinergic responses, synaptic plasticity and memory formation. The chain is Muscle, skeletal receptor tyrosine protein kinase (Musk) from Rattus norvegicus (Rat).